A 200-amino-acid polypeptide reads, in one-letter code: N-(5'-phosphoribosyl)anthranilate isomerase (200 aa).

This sequence belongs to the TrpF family.

It carries out the reaction N-(5-phospho-beta-D-ribosyl)anthranilate = 1-(2-carboxyphenylamino)-1-deoxy-D-ribulose 5-phosphate. The protein operates within amino-acid biosynthesis; L-tryptophan biosynthesis; L-tryptophan from chorismate: step 3/5. The chain is N-(5'-phosphoribosyl)anthranilate isomerase from Endomicrobium trichonymphae.